The sequence spans 937 residues: MHRPRRRGTRPPPLALLAALLLAARGADAQETELSVSAELVPTSSWNTSSEIDKGSYLTLDEPMNNITTSLGQTAELHCKVSGNPPPSIRWFKNDAPVVQEPRRISFRATNYGSRLRIRNLDTTDTGYFQCVATNGKKVVSTTGVLFVKFGPPPTASPGSSDEYEEDGFCQPYRGIACARFIGNRTVYMESLHMQGEIENQITAAFTMIGTSSHLSDKCSQFAIPSLCHYAFPYCDETSSVPKPRDLCRDECEVLENVLCQTEYIFARSNPMILMRLKLPNCEDLPQPESPEAANCIRIGIPMADPINKNHKCYNSTGVDYRGTVSVTKSGRQCQPWNSQYPHTHSFTALRFPELNGGHSYCRNPGNQKEAPWCFTLDENFKSDLCDIPACDSKDSKEKNKMEILYILVPSVAIPLAIAFLFFFICVCRNNQKSSSPPVQRQPKPVRGQNVEMSMLNAYKPKSKAKELPLSAVRFMEELGECTFGKIYKGHLYLPGMDHAQLVAIKTLKDYNNPQQWTEFQQEASLMAELHHPNIVCLLGAVTQEQPVCMLFEYMNQGDLHEFLIMRSPHSDVGCSSDEDGTVKSSLDHGDFLHIAIQIAAGMEYLSSHFFVHKDLAARNILIGEQLHVKISDLGLSREIYSADYYRVQSKSSLPIRWMPPEAIMYGKFSSDSDIWSFGVVLWEIFSFGLQPYYGFSNQEVIEMVRKRQLLPCSEDCPPRMYSLMTECWNEIPSRRPRFKDIHVRLRSWEGLSSHTSSTTPSGGNATTQTTSLSASPVSNLSNPRFPNYMFPSQGITPQGQIAGFIGPAIPQNQRFIPINGYPIPPGYAAFPAAHYQPAGPPRVIQHCPPPKSRSPSSASGSTSTGHVASLPSSGSNQEANVPLLPHMSIPNHPGGMGITVFGNKSQKPYKIDSKQSSLLGDSHIHGHTESMISAEV.

A signal peptide spans Met-1–Ala-29. Over Gln-30–Tyr-406 the chain is Extracellular. The region spanning Pro-42–Ser-141 is the Ig-like C2-type domain. Residues Asn-47 and Asn-66 are each glycosylated (N-linked (GlcNAc...) asparagine). Intrachain disulfides connect Cys-79-Cys-131, Cys-170-Cys-235, Cys-178-Cys-228, Cys-219-Cys-260, Cys-248-Cys-296, Cys-252-Cys-282, Cys-313-Cys-391, Cys-334-Cys-374, and Cys-362-Cys-386. One can recognise an FZ domain in the interval Glu-165–Ile-299. Asn-184 is a glycosylation site (N-linked (GlcNAc...) asparagine). Residues Lys-312–Cys-391 enclose the Kringle domain. An N-linked (GlcNAc...) asparagine glycan is attached at Asn-315. A helical transmembrane segment spans residues Ile-407–Val-427. Residues Cys-428 to Val-937 lie on the Cytoplasmic side of the membrane. The region spanning Val-473 to Leu-746 is the Protein kinase domain. ATP contacts are provided by residues Leu-479–Ile-487 and Lys-506. Tyr-645 is subject to Phosphotyrosine; by autocatalysis. Residues Ser-753–Ser-762 show a composition bias toward low complexity. 3 disordered regions span residues Ser-753–Val-778, Gly-840–Ile-890, and Gln-916–Val-937. Polar residues predominate over residues Gly-763 to Val-778. The span at Arg-854–Ser-864 shows a compositional bias: low complexity. Residues Thr-865 to Ala-880 show a composition bias toward polar residues.

The protein belongs to the protein kinase superfamily. Tyr protein kinase family. ROR subfamily. Interacts with ERBB2 and IGFBP5. At postnatal P0, expressed in heart, lung, liver, kidney, spleen and inner ear.

It is found in the membrane. The protein resides in the cell projection. The protein localises to the axon. Functionally, has very low kinase activity in vitro and is unlikely to function as a tyrosine kinase in vivo. Receptor for ligand WNT5A which activate downstream NFkB signaling pathway and may result in the inhibition of WNT3A-mediated signaling. In inner ear, crucial for spiral ganglion neurons to innervate auditory hair cells. Via IGFBP5 ligand, forms a complex with ERBB2 to enhance CREB oncogenic signaling. This is Inactive tyrosine-protein kinase transmembrane receptor ROR1 (Ror1) from Mus musculus (Mouse).